A 263-amino-acid polypeptide reads, in one-letter code: NADH dehydrogenase [ubiquinone] iron-sulfur protein 3, mitochondrial (263 aa).

The N-terminal 35 residues, 1 to 35 (MVAAVARLWWRGLLGASALTRGAGRPSVLLLPVRR), are a transit peptide targeting the mitochondrion.

The protein belongs to the complex I 30 kDa subunit family. In terms of assembly, core subunit of respiratory chain NADH dehydrogenase (Complex I) which is composed of 45 different subunits. Interacts with NDUFAF3. Interacts with RAB5IF. Found in subcomplexes containing subunits NDUFS2, MT-ND1 and NDUFA13.

Its subcellular location is the mitochondrion inner membrane. The enzyme catalyses a ubiquinone + NADH + 5 H(+)(in) = a ubiquinol + NAD(+) + 4 H(+)(out). In terms of biological role, core subunit of the mitochondrial membrane respiratory chain NADH dehydrogenase (Complex I) which catalyzes electron transfer from NADH through the respiratory chain, using ubiquinone as an electron acceptor. Essential for the catalytic activity and assembly of complex I. The chain is NADH dehydrogenase [ubiquinone] iron-sulfur protein 3, mitochondrial (NDUFS3) from Pongo pygmaeus (Bornean orangutan).